Reading from the N-terminus, the 550-residue chain is Eukaryotic translation initiation factor 3 subunit D-2 (550 aa).

Positions Arg108–Arg152 are disordered. Over residues Arg115–Thr136 the composition is skewed to low complexity. An RNA gate region spans residues Gln290–Pro304. Residues Pro527–Asn550 are disordered.

The protein belongs to the eIF-3 subunit D family. As to quaternary structure, component of the eukaryotic translation initiation factor 3 (eIF-3) complex. The eIF-3 complex interacts with pix.

The protein localises to the cytoplasm. MRNA cap-binding component of the eukaryotic translation initiation factor 3 (eIF-3) complex, which is involved in protein synthesis of a specialized repertoire of mRNAs and, together with other initiation factors, stimulates binding of mRNA and methionyl-tRNAi to the 40S ribosome. The eIF-3 complex specifically targets and initiates translation of a subset of mRNAs involved in cell proliferation. In the eIF-3 complex, eif3d specifically recognizes and binds the 7-methylguanosine cap of a subset of mRNAs. The chain is Eukaryotic translation initiation factor 3 subunit D-2 from Drosophila sechellia (Fruit fly).